Here is a 503-residue protein sequence, read N- to C-terminus: Poxin-Schlafen (503 aa).

The segment at 1 to 236 (MFYAHAFGGY…SKEERVDYVL (236 aa)) is poxin-like. Catalysis depends on His15, which acts as the Proton donor. The active-site Shared with catalytic histidine of dimeric partner is Tyr136. Catalysis depends on Lys140, which acts as the Proton acceptor; shared with catalytic histidine of dimeric partner. A schlafen-like region spans residues 237–503 (MKRLESIHHL…PDEWVSHIKF (267 aa)).

This sequence in the N-terminal section; belongs to the poxin family. The protein in the C-terminal section; belongs to the Schlafen protein family. Subgroup poxviridae B3 subfamily. As to quaternary structure, homodimer.

The enzyme catalyses 2',3'-cGAMP + H2O = Gp(2'-5')Ap(3') + H(+). Nuclease that is responsible for viral evasion of host cGAS-STING innate immunity. Cleaves 2',3'-cGAMP which is produced by host cGAS following recognition of intracellular foreign DNA and blocks the subsequent 2',3'-cGAMP-mediated activation of TMEM173/STING which normally spreads to adjacent cells and activates the interferon and NF-kappa-B immune responses. In Cynomys gunnisoni (Gunnison's prairie dog), this protein is Poxin-Schlafen (OPG188).